A 248-amino-acid chain; its full sequence is Carbohydrate deacetylase (248 aa).

Positions 59 and 121 each coordinate Mg(2+).

Belongs to the YdjC deacetylase family. Mg(2+) serves as cofactor.

Probably catalyzes the deacetylation of acetylated carbohydrates an important step in the degradation of oligosaccharides. The protein is Carbohydrate deacetylase of Brevibacillus brevis (strain 47 / JCM 6285 / NBRC 100599).